Consider the following 445-residue polypeptide: Putative ubiquitin carboxyl-terminal hydrolase L293 (445 aa).

A USP domain is found at 133–441; sequence KALANFGNSC…SAYIILYGDI (309 aa). C142 functions as the Nucleophile in the catalytic mechanism. The active-site Proton acceptor is the H384.

This sequence belongs to the peptidase C19 family.

The protein resides in the virion. It catalyses the reaction Thiol-dependent hydrolysis of ester, thioester, amide, peptide and isopeptide bonds formed by the C-terminal Gly of ubiquitin (a 76-residue protein attached to proteins as an intracellular targeting signal).. This Acanthamoeba polyphaga mimivirus (APMV) protein is Putative ubiquitin carboxyl-terminal hydrolase L293.